Here is a 135-residue protein sequence, read N- to C-terminus: Large ribosomal subunit protein mL41B (135 aa).

The N-terminal 13 residues, M1 to R13, are a transit peptide targeting the mitochondrion.

It belongs to the mitochondrion-specific ribosomal protein mL41 family. In terms of assembly, component of the mitochondrial ribosome large subunit (39S) which comprises a 16S rRNA and about 50 distinct proteins.

It localises to the mitochondrion. Component of the mitochondrial ribosome large subunit. Also involved in apoptosis and cell cycle. The polypeptide is Large ribosomal subunit protein mL41B (mrpl41-b) (Xenopus laevis (African clawed frog)).